The primary structure comprises 360 residues: SVP1-like protein 2 (360 aa).

WD repeat units follow at residues 12–50, 191–231, and 236–275; these read AHEP…LRMK, AHKS…LRFE, and LDRA…PQPE.

The protein belongs to the WD repeat PROPPIN family.

The protein localises to the vacuole membrane. It localises to the cytoplasmic vesicle membrane. Involved in mitochondrial or peroxisomal functions and amino acid signaling pathways. The chain is SVP1-like protein 2 (HSV2) from Pichia angusta (Yeast).